Consider the following 199-residue polypeptide: 7-methyl-GTP pyrophosphatase (199 aa).

Aspartate 73 (proton acceptor) is an active-site residue.

It belongs to the Maf family. YceF subfamily. A divalent metal cation serves as cofactor.

Its subcellular location is the cytoplasm. The catalysed reaction is N(7)-methyl-GTP + H2O = N(7)-methyl-GMP + diphosphate + H(+). In terms of biological role, nucleoside triphosphate pyrophosphatase that hydrolyzes 7-methyl-GTP (m(7)GTP). May have a dual role in cell division arrest and in preventing the incorporation of modified nucleotides into cellular nucleic acids. The polypeptide is 7-methyl-GTP pyrophosphatase (Bordetella pertussis (strain Tohama I / ATCC BAA-589 / NCTC 13251)).